The chain runs to 637 residues: Chaperone protein HtpG (637 aa).

The interval 1 to 347 (MTQSVHAETH…SNDLPLNVSR (347 aa)) is a; substrate-binding. The interval 348–564 (EILQDNKVTV…NHGMSTQMIK (217 aa)) is b. A c region spans residues 565–637 (LMRAAGQPVP…SRINRLLLQA (73 aa)).

The protein belongs to the heat shock protein 90 family. Homodimer.

It localises to the cytoplasm. Functionally, molecular chaperone. Has ATPase activity. This Aeromonas salmonicida (strain A449) protein is Chaperone protein HtpG.